The sequence spans 1373 residues: DNA-directed RNA polymerase subunit beta (1373 aa).

The protein belongs to the RNA polymerase beta chain family. As to quaternary structure, the RNAP catalytic core consists of 2 alpha, 1 beta, 1 beta' and 1 omega subunit. When a sigma factor is associated with the core the holoenzyme is formed, which can initiate transcription.

The catalysed reaction is RNA(n) + a ribonucleoside 5'-triphosphate = RNA(n+1) + diphosphate. Functionally, DNA-dependent RNA polymerase catalyzes the transcription of DNA into RNA using the four ribonucleoside triphosphates as substrates. This Rickettsia peacockii (strain Rustic) protein is DNA-directed RNA polymerase subunit beta.